A 156-amino-acid chain; its full sequence is ATP synthase subunit b (156 aa).

The chain crosses the membrane as a helical span at residues 11 to 31 (AIAFILFVWFCMKYVWPPLMA).

It belongs to the ATPase B chain family. As to quaternary structure, F-type ATPases have 2 components, F(1) - the catalytic core - and F(0) - the membrane proton channel. F(1) has five subunits: alpha(3), beta(3), gamma(1), delta(1), epsilon(1). F(0) has three main subunits: a(1), b(2) and c(10-14). The alpha and beta chains form an alternating ring which encloses part of the gamma chain. F(1) is attached to F(0) by a central stalk formed by the gamma and epsilon chains, while a peripheral stalk is formed by the delta and b chains.

It is found in the cell inner membrane. In terms of biological role, f(1)F(0) ATP synthase produces ATP from ADP in the presence of a proton or sodium gradient. F-type ATPases consist of two structural domains, F(1) containing the extramembraneous catalytic core and F(0) containing the membrane proton channel, linked together by a central stalk and a peripheral stalk. During catalysis, ATP synthesis in the catalytic domain of F(1) is coupled via a rotary mechanism of the central stalk subunits to proton translocation. Functionally, component of the F(0) channel, it forms part of the peripheral stalk, linking F(1) to F(0). The protein is ATP synthase subunit b of Salmonella agona (strain SL483).